The sequence spans 587 residues: Folylpolyglutamate synthase, mitochondrial (587 aa).

A mitochondrion-targeting transit peptide spans 1–42; sequence MSWARTHLRSALSLAAVSARGATTEGAARRWLSAWPAPQEPG. ATP is bound at residue 106-109; that stretch reads GKGS. 3 residues coordinate Mg(2+): serine 130, glutamate 200, and histidine 228. The ATP site is built by arginine 363 and aspartate 377. The tract at residues 484-508 is disordered; that stretch reads PDFLSSPSPEPGRPGSLQPALRPPH. A Phosphoserine modification is found at serine 539.

It belongs to the folylpolyglutamate synthase family. In terms of assembly, monomer. A monovalent cation is required as a cofactor.

The protein localises to the mitochondrion inner membrane. Its subcellular location is the mitochondrion matrix. The protein resides in the cytoplasm. It catalyses the reaction (6S)-5,6,7,8-tetrahydrofolyl-(gamma-L-Glu)(n) + L-glutamate + ATP = (6S)-5,6,7,8-tetrahydrofolyl-(gamma-L-Glu)(n+1) + ADP + phosphate + H(+). It participates in cofactor biosynthesis; tetrahydrofolylpolyglutamate biosynthesis. Functionally, catalyzes conversion of folates to polyglutamate derivatives allowing concentration of folate compounds in the cell and the intracellular retention of these cofactors, which are important substrates for most of the folate-dependent enzymes that are involved in one-carbon transfer reactions involved in purine, pyrimidine and amino acid synthesis. This is Folylpolyglutamate synthase, mitochondrial (FPGS) from Cricetulus griseus (Chinese hamster).